Consider the following 140-residue polypeptide: Large ribosomal subunit protein uL14 (140 aa).

At Ser-17 the chain carries Phosphoserine. Tyr-38 is modified (phosphotyrosine).

The protein belongs to the universal ribosomal protein uL14 family. As to quaternary structure, component of the large ribosomal subunit.

The protein resides in the cytoplasm. In terms of biological role, component of the large ribosomal subunit. The ribosome is a large ribonucleoprotein complex responsible for the synthesis of proteins in the cell. This Pongo abelii (Sumatran orangutan) protein is Large ribosomal subunit protein uL14 (RPL23).